Consider the following 3966-residue polypeptide: Histone-lysine N-methyltransferase 2A (3966 aa).

Disordered stretches follow at residues Met1–Val106 and Val130–Ile231. Positions Arg6–Arg25 match the Menin-binding motif (MBM) motif. Over residues Thr15–Gly29 the composition is skewed to gly residues. Positions Gly75–Ala102 are enriched in low complexity. The Integrase domain-binding motif 1 (IBM1) motif lies at Gly121 to Gly132. A phosphoserine; by CK2 mark is found at Ser134 and Ser140. The Integrase domain-binding motif 2 (IBM2) signature appears at Gln145–Gly150. Position 151 is a phosphoserine (Ser151). A DNA-binding region (a.T hook 1) is located at residues Lys167–Arg178. Phosphoserine is present on Ser195. Over residues Ser200 to Lys218 the composition is skewed to basic and acidic residues. The segment at residues Ser215–Thr225 is a DNA-binding region (a.T hook 2). Residue Lys237 is modified to N6-acetyllysine. Positions Arg299–Thr307 form a DNA-binding region, a.T hook 3. A disordered region spans residues Leu322–Lys343. Lys371 is modified (N6-acetyllysine). Positions Arg440–Leu590 are disordered. Low complexity predominate over residues Ser450–Gln489. At Ser516 the chain carries Phosphoserine. Residues Leu544–Ser557 are compositionally biased toward low complexity. Pro residues predominate over residues Ser558 to Gln571. The residue at position 634 (Lys634) is an N6-acetyllysine. The residue at position 678 (Ser678) is a Phosphoserine. 4 disordered regions span residues Glu711–Ala943, Arg963–Ile1003, Ile1034–Arg1064, and Ile1101–Pro1161. Low complexity-rich tracts occupy residues Ser717–Ser730 and Leu760–Leu790. Composition is skewed to polar residues over residues Asn791–Glu806 and Gln817–Pro830. Thr837 carries the post-translational modification Phosphothreonine. Positions Glu843–Lys887 are enriched in basic and acidic residues. Ser923 carries the phosphoserine modification. The segment covering Ser989–Ile1003 has biased composition (low complexity). The segment covering Leu1040–Ser1059 has biased composition (polar residues). Ser1053 carries the phosphoserine modification. The span at Ile1101–Ser1111 shows a compositional bias: basic and acidic residues. Residue Lys1127 is modified to N6-acetyllysine. A CXXC-type zinc finger spans residues Lys1144–Gln1192. Residues Cys1152, Cys1155, Cys1158, Cys1164, Cys1167, Cys1170, Cys1186, and Cys1191 each coordinate Zn(2+). The segment at Trp1196–Gln1390 is disordered. Residues Ser1217–Thr1229 are compositionally biased toward basic and acidic residues. The segment covering Ala1230–Ala1241 has biased composition (low complexity). Residue Lys1232 is modified to N6-acetyllysine. The span at Pro1245–Glu1270 shows a compositional bias: basic and acidic residues. The span at Lys1369–Gln1390 shows a compositional bias: polar residues. 3 PHD-type zinc fingers span residues Arg1430–Cys1481, Cys1478–Cys1532, and Gly1565–Arg1629. An interaction with histone H3K4me3 region spans residues Lys1583–Glu1599. In terms of domain architecture, Bromo spans Ala1637 to Val1767. Disordered stretches follow at residues Tyr1665–Lys1714 and Trp1807–Asp1870. Residues Ala1828–Pro1849 show a composition bias toward pro residues. The residue at position 1839 (Ser1839) is a Phosphoserine. Thr1847 carries the phosphothreonine modification. Ser1860 carries the phosphoserine modification. The C2HC pre-PHD-type zinc-finger motif lies at Asn1872–Val1912. The PHD-type 4 zinc finger occupies Leu1933–Arg1980. In terms of domain architecture, FYR N-terminal spans Asn2020–Cys2076. Position 2100 is a phosphoserine (Ser2100). The disordered stretch occupies residues Arg2147 to His2174. Thr2148 carries the phosphothreonine modification. A phosphoserine mark is found at Ser2152 and Ser2202. 4 disordered regions span residues Val2214–Gly2339, Arg2371–Ala2619, Glu2639–Asp2673, and Lys2709–Glu2759. Low complexity predominate over residues Ser2218 to Ser2230. 2 stretches are compositionally biased toward polar residues: residues Leu2250–Ser2284 and Thr2308–Ser2320. Basic and acidic residues-rich tracts occupy residues Ile2411–Asp2422 and Ser2430–Ser2440. The segment covering Gly2498–Glu2509 has biased composition (polar residues). Lys2524 participates in a covalent cross-link: Glycyl lysine isopeptide (Lys-Gly) (interchain with G-Cter in SUMO2). The span at Glu2528–Glu2537 shows a compositional bias: polar residues. Residue Ser2560 is modified to Phosphoserine. Over residues Pro2569–Pro2588 the composition is skewed to polar residues. Ser2607 is modified (phosphoserine). A compositionally biased stretch (basic residues) spans Lys2609–Arg2618. A compositionally biased stretch (acidic residues) spans Gly2663–Asp2673. Positions Ser2722–Pro2737 are enriched in polar residues. A compositionally biased stretch (basic and acidic residues) spans Asn2740–Glu2759. Residue Ser2792 is modified to Phosphoserine. The short motif at Ser2843–Lys2851 is the 9aaTAD element. Residue Ser2951 is modified to Phosphoserine. Lys2954 carries the N6-acetyllysine modification. 2 disordered regions span residues Ile2958 to Val3060 and Ala3164 to Ile3239. A compositionally biased stretch (polar residues) spans His3012–Pro3025. At Ser3032 the chain carries Phosphoserine. Residues Val3035–Val3060 are compositionally biased toward polar residues. Over residues Ser3167–Ser3178 the composition is skewed to low complexity. Polar residues predominate over residues Glu3196–Ser3212. Positions Leu3214–Lys3229 are enriched in basic residues. Phosphothreonine is present on Thr3369. N6-acetyllysine is present on Lys3459. Positions Thr3462–Ser3640 are disordered. Over residues Pro3475–Glu3487 the composition is skewed to polar residues. Residues Pro3501 to Gly3528 are compositionally biased toward low complexity. A phosphoserine mark is found at Ser3510 and Ser3523. Residues Thr3558–Asp3570 are compositionally biased toward basic and acidic residues. Positions Lys3663 to Phe3744 constitute an FYR C-terminal domain. Residues Gly3759–Glu3764 carry the WDR5 interaction motif (WIN) motif. The disordered stretch occupies residues His3782–Arg3805. In terms of domain architecture, SET spans Glu3826–Lys3942. S-adenosyl-L-methionine-binding residues include His3836 and Arg3838. Cys3879 carries the post-translational modification S-methylcysteine; by autocatalysis. Residues Tyr3880 and Asn3903–His3904 each bind S-adenosyl-L-methionine. Zn(2+) contacts are provided by Cys3906 and Cys3954. Residues Asn3950–Asn3966 enclose the Post-SET domain. Asn3955 provides a ligand contact to S-adenosyl-L-methionine. Residues Cys3956 and Cys3961 each contribute to the Zn(2+) site.

This sequence belongs to the class V-like SAM-binding methyltransferase superfamily. Histone-lysine methyltransferase family. TRX/MLL subfamily. In terms of assembly, MLL cleavage product N320 heterodimerizes with MLL cleavage product C180 (via SET and FYRC domains). Component of some MLL1/MLL complex, at least composed of the core components KMT2A/MLL1, ASH2L, HCFC1/HCF1, HCFC2, WDR5, DPY30 and RBBP5, as well as the facultative components BACC1, CHD8, E2F6, HSP70, INO80C, KANSL1, LAS1L, MAX, MCRS1, MEN1, MGA, KAT8/MOF, PELP1, PHF20, PRP31, RING2, RUVB1/TIP49A, RUVB2/TIP49B, SENP3, TAF1, TAF4, TAF6, TAF7, TAF9 and TEX10. Interacts (via WIN motif) with WDR5; the interaction is direct. Interaction with WDR5 is required for stable interaction with ASH2L and RBBP5, and thereby also for optimal histone methyltransferase activity. Interacts with KAT8/MOF; the interaction is direct. Interacts with SBF1 and PPP1R15A. Interacts with ZNF335. Interacts with CLOCK and BMAL1 in a circadian manner. Interacts with PPIE; this results in decreased histone H3 methyltransferase activity. Interacts with CREBBP. Interacts with the WRAD complex composed of WDR5, RBBP5, ASH2L and DPY30. Interacts (via MBM motif) with MEN1. Interacts (via IBM motifs) with PSIP1 (via IBD domain) with moderate affinity whereas the KMT2A-MEN1 complex interacts with a greater affinity; MEN1 enhances interaction of KMT2A with PSIP1. Phosphorylation increases its affinity for PSIP1. Forms a complex with CREBBP and CREB1. Post-translationally, proteolytic cleavage by TASP1 generates MLL cleavage 3product N320 and MLL cleavage product C180, which reassemble through a non-covalent association. 2 cleavage sites exist, cleavage site 1 (CS1) and cleavage site 2 (CS2), to generate MLL cleavage products N320 and C180. CS2 is the major site. In terms of processing, phosphorylation increases its interaction with PSIP1. Auto-methylated at Cys-3879: auto-methylation is inhibited by the WRAD complex and unmodified histone H3.

It is found in the nucleus. The catalysed reaction is L-lysyl(4)-[histone H3] + S-adenosyl-L-methionine = N(6)-methyl-L-lysyl(4)-[histone H3] + S-adenosyl-L-homocysteine + H(+). It catalyses the reaction N(6)-methyl-L-lysyl(4)-[histone H3] + S-adenosyl-L-methionine = N(6),N(6)-dimethyl-L-lysyl(4)-[histone H3] + S-adenosyl-L-homocysteine + H(+). The enzyme catalyses L-cysteinyl-[protein] + S-adenosyl-L-methionine = S-methyl-L-cysteinyl-[protein] + S-adenosyl-L-homocysteine + H(+). Its function is as follows. Histone methyltransferase that plays an essential role in early development and hematopoiesis. Catalytic subunit of the MLL1/MLL complex, a multiprotein complex that mediates both methylation of 'Lys-4' of histone H3 (H3K4me) complex and acetylation of 'Lys-16' of histone H4 (H4K16ac). Catalyzes methyl group transfer from S-adenosyl-L-methionine to the epsilon-amino group of 'Lys-4' of histone H3 (H3K4) via a non-processive mechanism. Part of chromatin remodeling machinery predominantly forms H3K4me1 and H3K4me2 methylation marks at active chromatin sites where transcription and DNA repair take place. Has weak methyltransferase activity by itself, and requires other component of the MLL1/MLL complex to obtain full methyltransferase activity. Has no activity toward histone H3 phosphorylated on 'Thr-3', less activity toward H3 dimethylated on 'Arg-8' or 'Lys-9', while it has higher activity toward H3 acetylated on 'Lys-9'. Binds to unmethylated CpG elements in the promoter of target genes and helps maintain them in the nonmethylated state. Required for transcriptional activation of HOXA9. Promotes PPP1R15A-induced apoptosis. Plays a critical role in the control of circadian gene expression and is essential for the transcriptional activation mediated by the CLOCK-BMAL1 heterodimer. Establishes a permissive chromatin state for circadian transcription by mediating a rhythmic methylation of 'Lys-4' of histone H3 (H3K4me) and this histone modification directs the circadian acetylation at H3K9 and H3K14 allowing the recruitment of CLOCK-BMAL1 to chromatin. Also has auto-methylation activity on Cys-3879 in absence of histone H3 substrate. In Mus musculus (Mouse), this protein is Histone-lysine N-methyltransferase 2A (Kmt2a).